The sequence spans 227 residues: Prolactin (227 aa).

The first 28 residues, 1–28 (MDSKWSRRTGSLLLLLVSNLLLCKSTAS), serve as a signal peptide directing secretion. An intrachain disulfide couples C32 to C39. Residues S54, S62, and S118 each carry the phosphoserine modification. 2 cysteine pairs are disulfide-bonded: C86/C202 and C219/C227.

The protein belongs to the somatotropin/prolactin family. As to quaternary structure, interacts with PRLR.

It localises to the secreted. In terms of biological role, prolactin acts primarily on the mammary gland by promoting lactation. The protein is Prolactin (PRL) of Oryctolagus cuniculus (Rabbit).